The following is a 619-amino-acid chain: MKKNRAFNQVKKTKFDGRIKTSAKHQLRNVKTGVKDGVFIYKGPLTVSEFASKTNIAVANIIKHFFLNGLALTVNSVLTNEQLADACVNFGFDFKMETEVTHENIVANIQFEDSDDLLQPRPPIVTIMGHVDHGKTSLLDTIRKTNVTAKEFGGITQKIGAYQVKNHQNKTITFIDTPGHEAFTLMRARGAKVTDIVVLVVAADDGIKKQTEEAISHAKSANTPIIVFINKMDKPTANPDLVIQQLNKFDLVPEAWGGKTIFVMGSALTGQGINELLDNILLLGEVEGYQANYNAHSSGYAIEVQTSKGLGPIANVIVKRGTLKLGDIVVLGPAYGRVRTMHDENGNSLKQATPSKPVQISGFDIMPVAGEKFIVFDDEKDAKLIANKFKEQQKQKANNLTVNQTLKEQIKNKEIKILNLIFKADSDGSLQAIKQAVENINVAKISLSIIHAAVGQISESDIMLAKASGALLFSLNLGLSQTVKNIASLQGVKLEVHYHIPKLAEEIENILKGQLDPVYEEIEIGKAEVLQLWFHSKIGNIAGTIVKSGKIKRGNLCKLFRDKEIIFEGRIDSLKNEKTPVNLIETGKNCGIVINGCNDIKIGDIIVAYEKQIVKDGKL.

A tr-type G domain is found at 120–289; that stretch reads PRPPIVTIMG…ILLLGEVEGY (170 aa). The interval 129 to 136 is G1; sequence GHVDHGKT. GTP is bound at residue 129 to 136; sequence GHVDHGKT. The segment at 154 to 158 is G2; sequence GITQK. The tract at residues 176-179 is G3; that stretch reads DTPG. GTP contacts are provided by residues 176–180 and 230–233; these read DTPGH and NKMD. Residues 230 to 233 form a G4 region; it reads NKMD. Residues 266-268 form a G5 region; it reads SAL.

This sequence belongs to the TRAFAC class translation factor GTPase superfamily. Classic translation factor GTPase family. IF-2 subfamily.

It localises to the cytoplasm. Functionally, one of the essential components for the initiation of protein synthesis. Protects formylmethionyl-tRNA from spontaneous hydrolysis and promotes its binding to the 30S ribosomal subunits. Also involved in the hydrolysis of GTP during the formation of the 70S ribosomal complex. The protein is Translation initiation factor IF-2 (infB) of Mycoplasma genitalium (strain ATCC 33530 / DSM 19775 / NCTC 10195 / G37) (Mycoplasmoides genitalium).